The following is a 419-amino-acid chain: Pyrophosphate--fructose 6-phosphate 1-phosphotransferase (419 aa).

Gly13 serves as a coordination point for diphosphate. Substrate is bound by residues Thr142 to Asp144, Met190 to Arg192, Glu247, and Tyr297 to Arg300. Asp144 (proton acceptor) is an active-site residue.

The protein belongs to the phosphofructokinase type A (PFKA) family. PPi-dependent PFK group II subfamily. Clade 'B2' sub-subfamily. As to quaternary structure, homodimer. The cofactor is Mg(2+).

It is found in the cytoplasm. It carries out the reaction beta-D-fructose 6-phosphate + diphosphate = beta-D-fructose 1,6-bisphosphate + phosphate + H(+). It functions in the pathway carbohydrate degradation; glycolysis; D-glyceraldehyde 3-phosphate and glycerone phosphate from D-glucose: step 3/4. Non-allosteric. Functionally, catalyzes the phosphorylation of D-fructose 6-phosphate, the first committing step of glycolysis. Uses inorganic phosphate (PPi) as phosphoryl donor instead of ATP like common ATP-dependent phosphofructokinases (ATP-PFKs), which renders the reaction reversible, and can thus function both in glycolysis and gluconeogenesis. Consistently, PPi-PFK can replace the enzymes of both the forward (ATP-PFK) and reverse (fructose-bisphosphatase (FBPase)) reactions. The sequence is that of Pyrophosphate--fructose 6-phosphate 1-phosphotransferase from Halomonas elongata (strain ATCC 33173 / DSM 2581 / NBRC 15536 / NCIMB 2198 / 1H9).